A 228-amino-acid chain; its full sequence is Cytochrome c oxidase subunit 2 (228 aa).

The Mitochondrial intermembrane segment spans residues Met-1–His-26. The helical transmembrane segment at Thr-27–Asn-48 threads the bilayer. The Mitochondrial matrix segment spans residues Lys-49–Glu-62. Residues Ile-63–Arg-82 traverse the membrane as a helical segment. The Mitochondrial intermembrane portion of the chain corresponds to Leu-83–Asn-228. His-161, Cys-196, Glu-198, Cys-200, His-204, and Met-207 together coordinate Cu cation. Mg(2+) is bound at residue Glu-198.

The protein belongs to the cytochrome c oxidase subunit 2 family. Component of the cytochrome c oxidase (complex IV, CIV), a multisubunit enzyme composed of a catalytic core of 3 subunits and several supernumerary subunits. The complex exists as a monomer or a dimer and forms supercomplexes (SCs) in the inner mitochondrial membrane with ubiquinol-cytochrome c oxidoreductase (cytochrome b-c1 complex, complex III, CIII). Cu cation is required as a cofactor.

Its subcellular location is the mitochondrion inner membrane. It catalyses the reaction 4 Fe(II)-[cytochrome c] + O2 + 8 H(+)(in) = 4 Fe(III)-[cytochrome c] + 2 H2O + 4 H(+)(out). In terms of biological role, component of the cytochrome c oxidase, the last enzyme in the mitochondrial electron transport chain which drives oxidative phosphorylation. The respiratory chain contains 3 multisubunit complexes succinate dehydrogenase (complex II, CII), ubiquinol-cytochrome c oxidoreductase (cytochrome b-c1 complex, complex III, CIII) and cytochrome c oxidase (complex IV, CIV), that cooperate to transfer electrons derived from NADH and succinate to molecular oxygen, creating an electrochemical gradient over the inner membrane that drives transmembrane transport and the ATP synthase. Cytochrome c oxidase is the component of the respiratory chain that catalyzes the reduction of oxygen to water. Electrons originating from reduced cytochrome c in the intermembrane space (IMS) are transferred via the dinuclear copper A center (CU(A)) of subunit 2 and heme A of subunit 1 to the active site in subunit 1, a binuclear center (BNC) formed by heme A3 and copper B (CU(B)). The BNC reduces molecular oxygen to 2 water molecules using 4 electrons from cytochrome c in the IMS and 4 protons from the mitochondrial matrix. The sequence is that of Cytochrome c oxidase subunit 2 (COII) from Anopheles gambiae (African malaria mosquito).